The primary structure comprises 154 residues: 6,7-dimethyl-8-ribityllumazine synthase (154 aa).

Residues Phe23, 57-59, and 81-83 contribute to the 5-amino-6-(D-ribitylamino)uracil site; these read AFE and AVI. 86-87 contacts (2S)-2-hydroxy-3-oxobutyl phosphate; that stretch reads ST. The active-site Proton donor is His89. Residue Phe114 coordinates 5-amino-6-(D-ribitylamino)uracil. Residue Arg128 coordinates (2S)-2-hydroxy-3-oxobutyl phosphate.

This sequence belongs to the DMRL synthase family.

It carries out the reaction (2S)-2-hydroxy-3-oxobutyl phosphate + 5-amino-6-(D-ribitylamino)uracil = 6,7-dimethyl-8-(1-D-ribityl)lumazine + phosphate + 2 H2O + H(+). It functions in the pathway cofactor biosynthesis; riboflavin biosynthesis; riboflavin from 2-hydroxy-3-oxobutyl phosphate and 5-amino-6-(D-ribitylamino)uracil: step 1/2. Its function is as follows. Catalyzes the formation of 6,7-dimethyl-8-ribityllumazine by condensation of 5-amino-6-(D-ribitylamino)uracil with 3,4-dihydroxy-2-butanone 4-phosphate. This is the penultimate step in the biosynthesis of riboflavin. The sequence is that of 6,7-dimethyl-8-ribityllumazine synthase from Campylobacter jejuni subsp. jejuni serotype O:2 (strain ATCC 700819 / NCTC 11168).